Here is a 181-residue protein sequence, read N- to C-terminus: Protein Syd (181 aa).

This sequence belongs to the Syd family.

It localises to the cell inner membrane. Interacts with the SecY protein in vivo. May bind preferentially to an uncomplexed state of SecY, thus functioning either as a chelating agent for excess SecY in the cell or as a regulatory factor that negatively controls the translocase function. This Cronobacter sakazakii (strain ATCC BAA-894) (Enterobacter sakazakii) protein is Protein Syd.